The chain runs to 645 residues: Protein disulfide-isomerase A4 (645 aa).

An N-terminal signal peptide occupies residues 1–20 (MRPRKAFLLLLLLGLVQLLA). Thioredoxin domains are found at residues 21–169 (VAGA…EVSQ) and 158–301 (EEIV…EFLK). The segment at 24–58 (AEGPDEDSSNRENAIEDEEEEEEEDDDEEEDDLEV) is disordered. Positions 38–58 (IEDEEEEEEEDDDEEEDDLEV) are enriched in acidic residues. The short motif at 91–94 (CGHC) is the CXXC element. Cystine bridges form between cysteine 91–cysteine 94 and cysteine 206–cysteine 209. The residue at position 366 (lysine 366) is an N6-acetyllysine. Residues 505-636 (FKKGKLKPVI…LSKFIEEHAT (132 aa)) enclose the Thioredoxin 3 domain. The short motif at 555-558 (CGHC) is the CXXC element. Cysteine 555 and cysteine 558 are disulfide-bonded. The Prevents secretion from ER signature appears at 642 to 645 (KEEL).

It belongs to the protein disulfide isomerase family. Part of a large chaperone multiprotein complex comprising DNAJB11, HSP90B1, HSPA5, HYOU, PDIA2, PDIA4, PDIA6, PPIB, SDF2L1, UGGT1 and very small amounts of ERP29, but not, or at very low levels, CALR nor CANX. Component of a complex containing at least CRELD2, MANF, MATN3 and PDIA4. As to quaternary structure, (Microbial infection) Interacts with Human astrovirus-1 and Human astrovirus-8 spike protein VP25; this interaction seems to facilitate the uncoating during virus entry into the cell. Does not interact with Human astrovirus-2 spike protein VP25.

The protein resides in the endoplasmic reticulum lumen. Its subcellular location is the melanosome. The enzyme catalyses Catalyzes the rearrangement of -S-S- bonds in proteins.. The chain is Protein disulfide-isomerase A4 (PDIA4) from Homo sapiens (Human).